Reading from the N-terminus, the 428-residue chain is Serine--tRNA ligase (428 aa).

231 to 233 (TAE) is a binding site for L-serine. 262-264 (RSE) contributes to the ATP binding site. Residue glutamate 285 participates in L-serine binding. 349-352 (EISS) is a binding site for ATP. Serine 385 contacts L-serine.

The protein belongs to the class-II aminoacyl-tRNA synthetase family. Type-1 seryl-tRNA synthetase subfamily. Homodimer. The tRNA molecule binds across the dimer.

The protein resides in the cytoplasm. It catalyses the reaction tRNA(Ser) + L-serine + ATP = L-seryl-tRNA(Ser) + AMP + diphosphate + H(+). The catalysed reaction is tRNA(Sec) + L-serine + ATP = L-seryl-tRNA(Sec) + AMP + diphosphate + H(+). It participates in aminoacyl-tRNA biosynthesis; selenocysteinyl-tRNA(Sec) biosynthesis; L-seryl-tRNA(Sec) from L-serine and tRNA(Sec): step 1/1. Its function is as follows. Catalyzes the attachment of serine to tRNA(Ser). Is also able to aminoacylate tRNA(Sec) with serine, to form the misacylated tRNA L-seryl-tRNA(Sec), which will be further converted into selenocysteinyl-tRNA(Sec). This is Serine--tRNA ligase from Staphylococcus epidermidis (strain ATCC 35984 / DSM 28319 / BCRC 17069 / CCUG 31568 / BM 3577 / RP62A).